The sequence spans 786 residues: Signal transducer and activator of transcription 5B (786 aa).

Position 90 is a phosphotyrosine (Y90). Phosphoserine is present on S128. The SH2 domain maps to 589-686 (WNDGAILGFV…EVYSKYYTPV (98 aa)). Phosphotyrosine is present on residues Y682 and Y699.

The protein belongs to the transcription factor STAT family. In terms of assembly, upon activation, forms a homodimer or a heterodimer with a related family member. Binds NR3C1. Interacts with NCOA1. Interacts with SOCS7. Interacts (via SH2 domain) with INSR. Interacts with CPEB3; this inhibits STAT5B-mediated transcriptional activation. Post-translationally, tyrosine phosphorylated in response to signaling via activated KIT, resulting in translocation to the nucleus. Tyrosine phosphorylated in response to signaling via activated FLT3; wild-type FLT3 results in much weaker phosphorylation than constitutively activated mutant FLT3. Alternatively, can be phosphorylated by JAK2. Phosphorylation at Tyr-699 by PTK6 or HCK leads to an increase of its transcriptional activity. In the virgin, found in most tissues. Particularly abundant in muscle tissue of virgin and lactating females, and of males.

Its subcellular location is the cytoplasm. It localises to the nucleus. In terms of biological role, carries out a dual function: signal transduction and activation of transcription. Mediates cellular responses to the cytokine KITLG/SCF and other growth factors. Binds to the GAS element and activates PRL-induced transcription. Positively regulates hematopoietic/erythroid differentiation. The sequence is that of Signal transducer and activator of transcription 5B (Stat5b) from Mus musculus (Mouse).